Consider the following 616-residue polypeptide: 2-[(L-alanin-3-ylcarbamoyl)methyl]-3-(2-aminoethylcarbamoyl)-2-hydroxypropanoate synthase (616 aa).

It belongs to the IucA/IucC family. In terms of assembly, forms a mixture of monomer and dimer in solution.

The catalysed reaction is 2-[(2-aminoethylcarbamoyl)methyl]-2-hydroxybutanedioate + (S)-2,3-diaminopropanoate + ATP = 2-[(L-alanin-3-ylcarbamoyl)methyl]-3-(2-aminoethylcarbamoyl)-2-hydroxypropanoate + AMP + diphosphate. Its pathway is siderophore biosynthesis. Functionally, catalyzes the condensation of L-2,3-diaminopropionic acid (L-Dap) and citryl-diaminoethane to form L-2,3-diaminopropionyl-citryl-diaminoethane, the third step in staphyloferrin B biosynthesis. The sequence is that of 2-[(L-alanin-3-ylcarbamoyl)methyl]-3-(2-aminoethylcarbamoyl)-2-hydroxypropanoate synthase from Staphylococcus aureus (strain NCTC 8325 / PS 47).